The primary structure comprises 373 residues: Indole glucosinolate O-methyltransferase 2 (373 aa).

5 residues coordinate S-adenosyl-L-homocysteine: Gly-217, Asp-240, Asp-260, Met-261, and Lys-274. The Proton acceptor role is filled by His-278.

Belongs to the class I-like SAM-binding methyltransferase superfamily. Cation-independent O-methyltransferase family.

Its pathway is secondary metabolite biosynthesis. Functionally, involved in indole glucosinolate biosynthesis. Catalyzes methoxylation reactions of the glucosinolate indole ring. Converts the hydroxy intermediates 4-hydroxy-indol-3-yl-methylglucosinolate (4OH-I3M) and 1-hydroxy-indol-3-yl-methylglucosinolate (1OH-I3M) to 4-methoxy-indol-3-yl-methylglucosinolate (4MO-I3M) and 1-methoxy-indol-3-yl-methylglucosinolate (1MO-I3M), respectively. This chain is Indole glucosinolate O-methyltransferase 2, found in Arabidopsis thaliana (Mouse-ear cress).